The chain runs to 62 residues: Short neurotoxin C (62 aa).

The segment covering 1-16 (RRCFNQQSSQPQTNKS) has biased composition (polar residues). The interval 1-22 (RRCFNQQSSQPQTNKSCPPGEN) is disordered. Intrachain disulfides connect cysteine 3–cysteine 24, cysteine 17–cysteine 41, cysteine 43–cysteine 54, and cysteine 55–cysteine 60.

This sequence belongs to the three-finger toxin family. Short-chain subfamily. Type I alpha-neurotoxin sub-subfamily. As to expression, expressed by the venom gland.

It is found in the secreted. Binds to muscle nicotinic acetylcholine receptor (nAChR) and inhibit acetylcholine from binding to the receptor, thereby impairing neuromuscular transmission. The chain is Short neurotoxin C from Laticauda laticaudata (Blue-ringed sea krait).